Consider the following 883-residue polypeptide: Valine--tRNA ligase (883 aa).

The short motif at 46 to 56 (PNVTGKLHLGH) is the 'HIGH' region element. The 'KMSKS' region motif lies at 520–524 (KMSKS). K523 contacts ATP. Residues 809–844 (LADLLNVEEELARLEKELAKWQKELDMVGKKLSNER) are a coiled coil.

The protein belongs to the class-I aminoacyl-tRNA synthetase family. ValS type 1 subfamily. Monomer.

The protein resides in the cytoplasm. The enzyme catalyses tRNA(Val) + L-valine + ATP = L-valyl-tRNA(Val) + AMP + diphosphate. Its function is as follows. Catalyzes the attachment of valine to tRNA(Val). As ValRS can inadvertently accommodate and process structurally similar amino acids such as threonine, to avoid such errors, it has a 'posttransfer' editing activity that hydrolyzes mischarged Thr-tRNA(Val) in a tRNA-dependent manner. This Streptococcus thermophilus (strain CNRZ 1066) protein is Valine--tRNA ligase.